The sequence spans 1043 residues: tRNA wybutosine-synthesizing protein 2/3/4 (1043 aa).

A tRNA wybutosine-synthesizing protein 3 homolog region spans residues 1–233; it reads MEFDRRKAAA…PVLQNGAKHG (233 aa). Residues 53 to 75 form a disordered region; that stretch reads RVSVLAQPPPPQQADPGGAKTKK. Kelch repeat units follow at residues 360 to 410, 412 to 460, 461 to 510, and 512 to 559; these read DIYV…AVDR, VYVF…SYGS, KLFL…IYKD, and LGIL…VIID. The tract at residues 700–1041 is tRNA wybutosine-synthesizing protein 2 homolog; sequence QPDDSCVFEE…RHLVVDVKCR (342 aa). S-adenosyl-L-methionine-binding positions include Lys-874 and 942–943; that span reads DN.

In the C-terminal section; belongs to the class I-like SAM-binding methyltransferase superfamily. TRM5/TYW2 family. This sequence in the N-terminal section; belongs to the TYW3 family.

The enzyme catalyses 4-demethyl-7-[(3S)-3-amino-3-carboxypropyl]wyosine(37) in tRNA(Phe) + S-adenosyl-L-methionine = 7-[(3S)-3-amino-3-carboxypropyl]wyosine(37) in tRNA(Phe) + S-adenosyl-L-homocysteine + H(+). The catalysed reaction is 4-demethylwyosine(37) in tRNA(Phe) + S-adenosyl-L-methionine = 4-demethyl-7-[(3S)-3-amino-3-carboxypropyl]wyosine(37) in tRNA(Phe) + S-methyl-5'-thioadenosine + H(+). It functions in the pathway tRNA modification; wybutosine-tRNA(Phe) biosynthesis. Its function is as follows. S-adenosyl-L-methionine-dependent transferase that acts as a component of the wybutosine biosynthesis pathway. Wybutosine is a hyper modified guanosine with a tricyclic base found at the 3'-position adjacent to the anticodon of eukaryotic phenylalanine tRNA. The sequence is that of tRNA wybutosine-synthesizing protein 2/3/4 from Oryza sativa subsp. japonica (Rice).